We begin with the raw amino-acid sequence, 179 residues long: MSRIGKQPVTVPSGVDVTIDGQNVSVKGPKGTLTLDVAEPIAVTRDDDGAIVVTRPNDERRNRSLHGLSRTLIANLVTGVTEGYTTKMEIFGVGYRVVAKGSNLEFALGYSHPVLITAPEGVTFAVETPTKFSISGIDKQKVGQIAANIRRLRKSDPYKGKGIRYEGEQIRRKVGKTGK.

It belongs to the universal ribosomal protein uL6 family. In terms of assembly, part of the 50S ribosomal subunit.

Its function is as follows. This protein binds to the 23S rRNA, and is important in its secondary structure. It is located near the subunit interface in the base of the L7/L12 stalk, and near the tRNA binding site of the peptidyltransferase center. The polypeptide is Large ribosomal subunit protein uL6 (Mycolicibacterium vanbaalenii (strain DSM 7251 / JCM 13017 / BCRC 16820 / KCTC 9966 / NRRL B-24157 / PYR-1) (Mycobacterium vanbaalenii)).